The primary structure comprises 481 residues: Thiol protease (481 aa).

The 313-residue stretch at 169 to 481 folds into the Calpain catalytic domain; the sequence is DLREQALSST…ENFWYIAYMY (313 aa). Catalysis depends on residues Cys-229, His-406, and Asn-426.

The protein belongs to the peptidase C2 family.

With respect to regulation, inactive below 20 degrees Celsius and pH 6.0. Inhibited by divalent cations. Functionally, thiol protease. Probably an important virulence factor. The protein is Thiol protease (tpr) of Porphyromonas gingivalis (strain ATCC BAA-308 / W83).